A 348-amino-acid polypeptide reads, in one-letter code: Anthranilate phosphoribosyltransferase (348 aa).

Residues G87, 90–91 (GD), T95, 97–100 (NIST), 115–123 (KHGNRSASG), and S127 contribute to the 5-phospho-alpha-D-ribose 1-diphosphate site. G87 contributes to the anthranilate binding site. S99 is a binding site for Mg(2+). N118 provides a ligand contact to anthranilate. R173 provides a ligand contact to anthranilate. Residues D232 and E233 each coordinate Mg(2+).

It belongs to the anthranilate phosphoribosyltransferase family. In terms of assembly, homodimer. Requires Mg(2+) as cofactor.

The catalysed reaction is N-(5-phospho-beta-D-ribosyl)anthranilate + diphosphate = 5-phospho-alpha-D-ribose 1-diphosphate + anthranilate. The protein operates within amino-acid biosynthesis; L-tryptophan biosynthesis; L-tryptophan from chorismate: step 2/5. In terms of biological role, catalyzes the transfer of the phosphoribosyl group of 5-phosphorylribose-1-pyrophosphate (PRPP) to anthranilate to yield N-(5'-phosphoribosyl)-anthranilate (PRA). In Synechococcus sp. (strain CC9311), this protein is Anthranilate phosphoribosyltransferase.